Reading from the N-terminus, the 529-residue chain is Ell-associated factor Eaf (529 aa).

Disordered regions lie at residues 155-235 and 253-529; these read AAGS…PMIT and ANIS…DDDD. The span at 167–186 shows a compositional bias: polar residues; the sequence is ENSTMRISSKTKVSTGSRRN. Low complexity-rich tracts occupy residues 194-215, 256-265, 306-315, and 327-346; these read RNSPMQQSSPSRPVVSHRSPQS, SGSSTGSSSG, HQNQQQQQQN, and QQQHQQQMQQQQQQHQQQQQ. S196 carries the phosphoserine modification. The segment covering 347 to 359 has biased composition (polar residues); sequence RASFSHSNHSNSM. Acidic residues predominate over residues 401 to 416; the sequence is DSSDTDSGSDSDDSTD. Low complexity-rich tracts occupy residues 431–451, 469–480, 488–499, and 510–523; these read HQQQHHQMQQQHQQQQQHMHQ, QHQQQQQQPPQQ, QQQQQQQQQQQS, and NDLLQNDLQLSSNS.

The protein belongs to the EAF family.

The protein localises to the nucleus. Its function is as follows. Promotes transcriptional elongation by Su(Tpl)/ELL. Essential for development. The sequence is that of Ell-associated factor Eaf from Drosophila grimshawi (Hawaiian fruit fly).